The primary structure comprises 524 residues: Inosine-5'-monophosphate dehydrogenase (524 aa).

CBS domains lie at 121–180 and 184–242; these read FILD…NTPV and MTPR…PLAS. Residues 280-282 and 330-332 each bind NAD(+); these read DSS and GMG. Gly332 and Gly334 together coordinate K(+). Ser335 serves as a coordination point for IMP. A K(+)-binding site is contributed by Cys337. Cys337 serves as the catalytic Thioimidate intermediate. IMP is bound by residues 370–372, 393–394, and 417–421; these read DGG, GG, and YRGMG. Arg439 (proton acceptor) is an active-site residue. An IMP-binding site is contributed by Gln451. Residues Glu510 and Gly511 each contribute to the K(+) site.

It belongs to the IMPDH/GMPR family. As to quaternary structure, homotetramer. It depends on K(+) as a cofactor.

The protein resides in the cytoplasm. The enzyme catalyses IMP + NAD(+) + H2O = XMP + NADH + H(+). Its pathway is purine metabolism; XMP biosynthesis via de novo pathway; XMP from IMP: step 1/1. Mycophenolic acid (MPA) is a non-competitive inhibitor that prevents formation of the closed enzyme conformation by binding to the same site as the amobile flap. In contrast, mizoribine monophosphate (MZP) is a competitive inhibitor that induces the closed conformation. MPA is a potent inhibitor of mammalian IMPDHs but a poor inhibitor of the bacterial enzymes. MZP is a more potent inhibitor of bacterial IMPDH. In terms of biological role, catalyzes the conversion of inosine 5'-phosphate (IMP) to xanthosine 5'-phosphate (XMP), the first committed and rate-limiting step in the de novo synthesis of guanine nucleotides, and therefore plays an important role in the regulation of cell growth. This chain is Inosine-5'-monophosphate dehydrogenase (gua1), found in Schizosaccharomyces pombe (strain 972 / ATCC 24843) (Fission yeast).